A 177-amino-acid polypeptide reads, in one-letter code: MSRVGKLPIAIPEGVKIGLNDLEVKISGPKGELSKTFKGNIAISLAENKLLVKPLAANKNVRAMWGTARSIISNMVTGVKEGFKLKLEINGVGYRAMVKGKYLNLMLAKSHNTKIEIPSDIKIEMPKQNIIILEGTDKEKLGQFASIIIKQRPPEPYKGKGIKFENQFIPRKEGKKN.

The protein belongs to the universal ribosomal protein uL6 family. As to quaternary structure, part of the 50S ribosomal subunit.

In terms of biological role, this protein binds to the 23S rRNA, and is important in its secondary structure. It is located near the subunit interface in the base of the L7/L12 stalk, and near the tRNA binding site of the peptidyltransferase center. This is Large ribosomal subunit protein uL6 from Rickettsia peacockii (strain Rustic).